The primary structure comprises 121 residues: Homeobox protein HD-6 (121 aa).

Positions Pro-28 to Tyr-87 form a DNA-binding region, homeobox.

The protein resides in the nucleus. This Encephalitozoon cuniculi (strain GB-M1) (Microsporidian parasite) protein is Homeobox protein HD-6 (HD-6).